The chain runs to 439 residues: 3-phosphoshikimate 1-carboxyvinyltransferase (439 aa).

3-phosphoshikimate-binding residues include K31, S32, and R36. K31 is a binding site for phosphoenolpyruvate. G103 and R131 together coordinate phosphoenolpyruvate. 3-phosphoshikimate contacts are provided by S175, Q177, D322, and K349. Phosphoenolpyruvate is bound at residue Q177. The Proton acceptor role is filled by D322. R353 and R397 together coordinate phosphoenolpyruvate.

The protein belongs to the EPSP synthase family. As to quaternary structure, monomer.

It localises to the cytoplasm. The enzyme catalyses 3-phosphoshikimate + phosphoenolpyruvate = 5-O-(1-carboxyvinyl)-3-phosphoshikimate + phosphate. The protein operates within metabolic intermediate biosynthesis; chorismate biosynthesis; chorismate from D-erythrose 4-phosphate and phosphoenolpyruvate: step 6/7. Functionally, catalyzes the transfer of the enolpyruvyl moiety of phosphoenolpyruvate (PEP) to the 5-hydroxyl of shikimate-3-phosphate (S3P) to produce enolpyruvyl shikimate-3-phosphate and inorganic phosphate. The sequence is that of 3-phosphoshikimate 1-carboxyvinyltransferase from Clostridium tetani (strain Massachusetts / E88).